Here is a 444-residue protein sequence, read N- to C-terminus: Phosphoglucosamine mutase (444 aa).

The active-site Phosphoserine intermediate is the Ser104. Mg(2+)-binding residues include Ser104, Asp243, Asp245, and Asp247. Ser104 carries the post-translational modification Phosphoserine.

It belongs to the phosphohexose mutase family. Mg(2+) is required as a cofactor. In terms of processing, activated by phosphorylation.

The catalysed reaction is alpha-D-glucosamine 1-phosphate = D-glucosamine 6-phosphate. Catalyzes the conversion of glucosamine-6-phosphate to glucosamine-1-phosphate. This chain is Phosphoglucosamine mutase, found in Neisseria meningitidis serogroup A / serotype 4A (strain DSM 15465 / Z2491).